The chain runs to 85 residues: CDC42 small effector protein homolog (85 aa).

S-palmitoyl cysteine attachment occurs at residues cysteine 14 and cysteine 15. In terms of domain architecture, CRIB spans 37-50 (IGNPTNFVHTGHIG). Phosphoserine occurs at positions 78 and 81.

It belongs to the CDC42SE/SPEC family.

It is found in the cytoplasm. It localises to the cytoskeleton. The protein localises to the cell membrane. In terms of biological role, probably involved in the organization of the actin cytoskeleton by acting downstream of CDC42, inducing actin filament assembly. The sequence is that of CDC42 small effector protein homolog (Spec2) from Drosophila melanogaster (Fruit fly).